A 1025-amino-acid polypeptide reads, in one-letter code: Putative calcium-transporting ATPase 11, plasma membrane-type (1025 aa).

Residues 1-157 (MSNLLKDFEV…NRYTEKPARS (157 aa)) lie on the Cytoplasmic side of the membrane. The interaction with calmodulin stretch occupies residues 19-30 (ARQRWRSSVGLV). Residues 158–178 (FLTFVWEALQDITLIILMVCA) form a helical membrane-spanning segment. Residues 179-196 (VVSIGVGVATEGFPKGMY) are Lumenal-facing. The helical transmembrane segment at 197–217 (DGTGILLSIILVVMVTAISDY) threads the bilayer. Over 218–345 (KQSLQFRDLD…EDETPLQVKL (128 aa)) the chain is Cytoplasmic. A helical membrane pass occupies residues 346–365 (NGVATIIGKIGLGFAVLTFV). Residues 366-395 (VLCIRFVVEKATAGSITEWSSEDALTLLDY) are Lumenal-facing. A helical transmembrane segment spans residues 396–413 (FAIAVTIIVVAVPEGLPL). At 414-801 (AVTLSLAFAM…KWGRAVYINI (388 aa)) the chain is on the cytoplasmic side. The active-site 4-aspartylphosphate intermediate is Asp-451. 2 residues coordinate Mg(2+): Asp-746 and Asp-750. The chain crosses the membrane as a helical span at residues 802–820 (QKFVQFQLTVNVVALIINF). The Lumenal segment spans residues 821–831 (VSACITGSAPL). The helical transmembrane segment at 832–852 (TAVQLLWVNMIMDTLGALALA) threads the bilayer. At 853-872 (TEPPNEGLMKRQPIGRTASF) the chain is on the cytoplasmic side. A helical transmembrane segment spans residues 873–895 (ITRAMWRNIIGQSIYQLIVLGIL). Residues 896 to 907 (NFAGKQILNLNG) are Lumenal-facing. The helical transmembrane segment at 908-929 (PDSTIVLNTIIFNSFVFCQVFN) threads the bilayer. Over 930 to 947 (EVNSREIEKINVFEGMFK) the chain is Cytoplasmic. A helical membrane pass occupies residues 948 to 969 (SWVFVAVMTATVGFQVIIVEFL). The Lumenal portion of the chain corresponds to 970–979 (GAFASTVPLS). Residues 980–1001 (WQHWLLCILIGSVSMILAVGLK) form a helical membrane-spanning segment. The Cytoplasmic segment spans residues 1002–1025 (CIPVESNRHHDGYELLPSGPSDSA).

It belongs to the cation transport ATPase (P-type) (TC 3.A.3) family. Type IIB subfamily.

It is found in the membrane. It carries out the reaction Ca(2+)(in) + ATP + H2O = Ca(2+)(out) + ADP + phosphate + H(+). Its activity is regulated as follows. Activated by calmodulin. In terms of biological role, this magnesium-dependent enzyme catalyzes the hydrolysis of ATP coupled with the translocation of calcium from the cytosol out of the cell or into organelles. In Arabidopsis thaliana (Mouse-ear cress), this protein is Putative calcium-transporting ATPase 11, plasma membrane-type (ACA11).